A 382-amino-acid chain; its full sequence is Toluene efflux pump periplasmic linker protein TtgD (382 aa).

Positions 1-23 (MRLERALRARQLIPLAAIWLLVG) are cleaved as a signal peptide. C24 carries the N-palmitoyl cysteine lipid modification. C24 carries S-diacylglycerol cysteine lipidation. Positions 100-136 (YEALLARAEASLLTAQNLARRYERLLDTNAISQQQYD) form a coiled coil.

The protein belongs to the membrane fusion protein (MFP) (TC 8.A.1) family.

It is found in the cell inner membrane. In terms of biological role, the periplasmic linker protein component of an inducible organic solvent efflux pump. Involved in export of toluene and styrene but not of m-xylene, propylbenzene or ethylbenzene. Is not involved in antibiotic or AMP efflux. The sequence is that of Toluene efflux pump periplasmic linker protein TtgD (ttgD) from Pseudomonas putida (strain DOT-T1E).